The chain runs to 665 residues: DNA mismatch repair protein MutL (665 aa).

Polar residues-rich tracts occupy residues 348–361 (LEAT…NGLS) and 407–421 (PSSQ…NSRY). Disordered regions lie at residues 348 to 370 (LEAT…AEEG) and 385 to 445 (VHRG…STSA). Low complexity predominate over residues 426-445 (YSTNAASTNTASNYSHSTSA).

This sequence belongs to the DNA mismatch repair MutL/HexB family.

This protein is involved in the repair of mismatches in DNA. It is required for dam-dependent methyl-directed DNA mismatch repair. May act as a 'molecular matchmaker', a protein that promotes the formation of a stable complex between two or more DNA-binding proteins in an ATP-dependent manner without itself being part of a final effector complex. The protein is DNA mismatch repair protein MutL of Shewanella denitrificans (strain OS217 / ATCC BAA-1090 / DSM 15013).